A 203-amino-acid polypeptide reads, in one-letter code: Pro-FMRFamide-related neuropeptide VF (203 aa).

An N-terminal signal peptide occupies residues 1 to 26 (MEIISSKRFILLTLATSSFLTSNTLC). Positions 27–57 (SDELMMPHFHSKEGYGKYYQLRGIPKGVKER) are excised as a propeptide. F94 carries the post-translational modification Phenylalanine amide. A propeptide spanning residues 97–106 (NIEDRRSPRA) is cleaved from the precursor. The residue at position 125 (F125) is a Phenylalanine amide. A propeptide spanning residues 128-203 (TTARRITKTL…QPVLQGAMKL (76 aa)) is cleaved from the precursor. The interval 161–186 (HQEIQSPGQEQPRKRVFTETDDAERK) is disordered. The span at 171–186 (QPRKRVFTETDDAERK) shows a compositional bias: basic and acidic residues.

The protein belongs to the FARP (FMRFamide related peptide) family. In terms of tissue distribution, isoform 1 is expressed at high levels in the hypothalamus and eye. Isoform 2 is specifically expressed in a region between the dorsomedial hypothalamic and ventromedial hypothalamic nuclei.

It localises to the secreted. Its function is as follows. Efficiently inhibits forskolin-induced production of cAMP. Acts as a potent negative regulator of gonadotropin synthesis and secretion. Induces secretion of prolactin. Efficiently inhibits forskolin-induced production of cAMP. Blocks morphine-induced analgesia. The chain is Pro-FMRFamide-related neuropeptide VF (Npvf) from Rattus norvegicus (Rat).